Consider the following 631-residue polypeptide: Fusexin 1 (631 aa).

Positions 1–19 are cleaved as a signal peptide; that stretch reads MRRAALILAFVLFIGLSSA. Residues 20 to 90 form a domain I N-terminus region; sequence TVTSADSITY…THQDSKLKYS (71 aa). Residues 20–537 are Extracellular-facing; the sequence is TVTSADSITY…NLFGGSGSGD (518 aa). The tract at residues 91–170 is domain II N-terminus; it reads TSTSDELRDI…KLATPAYIDN (80 aa). Residues Asp-112, Ser-146, Tyr-149, and Asp-150 each contribute to the Ca(2+) site. An intrachain disulfide couples Cys-125 to Cys-155. The interval 143–148 is fusion loop, required for fusogenic activity, not required for membrane surface localization; it reads SVTSPV. Positions 171-224 are domain I central section; that stretch reads PDEIFTAKAELQAGDKTIQSATLSNGDAGDGTVTDLGDSKISWNGNLDLGASEP. The segment at 225 to 316 is domain II C-terminus; that stretch reads ENSRVIALYS…KDSSLDTGSF (92 aa). Residues 317 to 348 form a domain I C-terminus region; it reads VYDTPELLSYPSFTVYVDAGENGYIEVTKPTG. Positions 349 to 455 are domain III; sequence DPDIISTSST…SVSVTGIQQS (107 aa). 3 disulfides stabilise this stretch: Cys-389-Cys-432, Cys-457-Cys-477, and Cys-490-Cys-506. Positions 443 to 467 are disordered; it reads DSTSVSVTGIQQSECNPGDQRREKN. Positions 456-509 are domain IV, required for fusogenic activity; it reads ECNPGDQRREKNENDRWEIYTCQDNGLTYEYDVTCAEDEKAVAQGDNQFSCEKQ. The segment at 510–537 is stem; that stretch reads DDDSGGGDNTGSDSGLFSNLFGGSGSGD. Residues 538-558 traverse the membrane as a helical segment; that stretch reads LLTQVHTALSILAGLVAGFFG. The Cytoplasmic segment spans residues 559–590; that stretch reads YRGARWIHGETDIKGGFKLESRNVSRVKRGSP. Residues 591–611 traverse the membrane as a helical segment; sequence VAGIVGAVLGFVVGYGVASVF. His-612 is a topological domain (extracellular). Residues 613–630 form a helical membrane-spanning segment; the sequence is PVVQIIVVLGIAVGLYYF. A topological domain (cytoplasmic) is located at residue Arg-631.

The protein belongs to the HAP2/GCS1 family. Fusexin 1 subfamily. In terms of assembly, monomer in solution, crystallizes as a trimer in high salt (2.5 M NaCl, 0.2 M CaCl(2)). The trimer is stabilized by interdomain contacts and numerous Ca(2+) and Na(+) ions.

Its subcellular location is the cell surface. The protein resides in the cell membrane. In terms of biological role, exhibits fusogenic activity. Mediates cell-cell fusion in mammalian cells when present in both cells (bilateral fusion). In Uncultured archaeon, this protein is Fusexin 1.